The following is a 465-amino-acid chain: Cysteine--tRNA ligase (465 aa).

C30 is a Zn(2+) binding site. A 'HIGH' region motif is present at residues 32–42 (ITVYDYCHVGH). Zn(2+)-binding residues include C214, H239, and E243. A 'KMSKS' region motif is present at residues 271–275 (KMSKS). K274 contacts ATP.

Belongs to the class-I aminoacyl-tRNA synthetase family. As to quaternary structure, monomer. Requires Zn(2+) as cofactor.

It is found in the cytoplasm. The catalysed reaction is tRNA(Cys) + L-cysteine + ATP = L-cysteinyl-tRNA(Cys) + AMP + diphosphate. In Burkholderia multivorans (strain ATCC 17616 / 249), this protein is Cysteine--tRNA ligase.